A 429-amino-acid polypeptide reads, in one-letter code: Adenylosuccinate synthetase (429 aa).

Residues 12-18 (GDEGKGK) and 40-42 (GHT) each bind GTP. Aspartate 13 (proton acceptor) is an active-site residue. Residues aspartate 13 and glycine 40 each contribute to the Mg(2+) site. IMP contacts are provided by residues 13–16 (DEGK), 38–41 (NAGH), threonine 128, arginine 142, glutamine 223, threonine 238, and arginine 302. Histidine 41 acts as the Proton donor in catalysis. 298 to 304 (TTTGRPR) is a substrate binding site. GTP-binding positions include arginine 304, 330–332 (SID), and 412–414 (SVG).

The protein belongs to the adenylosuccinate synthetase family. As to quaternary structure, homodimer. Mg(2+) is required as a cofactor.

The protein resides in the cytoplasm. The catalysed reaction is IMP + L-aspartate + GTP = N(6)-(1,2-dicarboxyethyl)-AMP + GDP + phosphate + 2 H(+). The protein operates within purine metabolism; AMP biosynthesis via de novo pathway; AMP from IMP: step 1/2. Its function is as follows. Plays an important role in the de novo pathway of purine nucleotide biosynthesis. Catalyzes the first committed step in the biosynthesis of AMP from IMP. This is Adenylosuccinate synthetase from Bacillus cereus (strain ZK / E33L).